A 645-amino-acid chain; its full sequence is Beta-galactosidase BgaA (645 aa).

Arg102 serves as a coordination point for substrate. Cys106 contributes to the Zn(2+) binding site. Asn140 contacts substrate. The active-site Proton donor is Glu141. The Zn(2+) site is built by Cys150, Cys152, and Cys155. Glu312 (nucleophile) is an active-site residue. Residues Trp320 and 360-363 (EQMH) contribute to the substrate site.

Belongs to the glycosyl hydrolase 42 family.

The catalysed reaction is Hydrolysis of terminal non-reducing beta-D-galactose residues in beta-D-galactosides.. Hydrolyzes chromogen 5-bromo-4-chloro-3-indolyl-beta-D-galactopyranoside (X-Gal) and p-nitrophenyl-beta-D-galactoside (pNPGal). This Thermus sp protein is Beta-galactosidase BgaA.